A 114-amino-acid polypeptide reads, in one-letter code: Putative protein TfaS (114 aa).

The protein belongs to the tfa family.

The sequence is that of Putative protein TfaS (tfaS) from Escherichia coli (strain K12).